Reading from the N-terminus, the 144-residue chain is MKTFSAKPHEVNREWFVIDAAGKVLGRLAAEIAHRLRGKHKPIYTPHVDTGDFIVVINVDKMRVTGNKAESKMYYRHSGYPGGIYETSFAKMHARFPGRPLEKAVKGMLPKGPLGYAMLKKLKIYAGAAHPHAAQQPRQLEVRA.

It belongs to the universal ribosomal protein uL13 family. In terms of assembly, part of the 50S ribosomal subunit.

Functionally, this protein is one of the early assembly proteins of the 50S ribosomal subunit, although it is not seen to bind rRNA by itself. It is important during the early stages of 50S assembly. The chain is Large ribosomal subunit protein uL13 from Nitrosospira multiformis (strain ATCC 25196 / NCIMB 11849 / C 71).